A 669-amino-acid polypeptide reads, in one-letter code: DNA ligase (669 aa).

Residues 34–38, 83–84, and Glu114 each bind NAD(+); these read DAEYD and SL. The active-site N6-AMP-lysine intermediate is the Lys116. 4 residues coordinate NAD(+): Arg137, Glu171, Lys287, and Lys311. 4 residues coordinate Zn(2+): Cys405, Cys408, Cys423, and Cys428. Residues 591 to 669 enclose the BRCT domain; sequence NVESYFAGKT…EERFLQELNK (79 aa).

It belongs to the NAD-dependent DNA ligase family. LigA subfamily. The cofactor is Mg(2+). It depends on Mn(2+) as a cofactor.

The catalysed reaction is NAD(+) + (deoxyribonucleotide)n-3'-hydroxyl + 5'-phospho-(deoxyribonucleotide)m = (deoxyribonucleotide)n+m + AMP + beta-nicotinamide D-nucleotide.. Functionally, DNA ligase that catalyzes the formation of phosphodiester linkages between 5'-phosphoryl and 3'-hydroxyl groups in double-stranded DNA using NAD as a coenzyme and as the energy source for the reaction. It is essential for DNA replication and repair of damaged DNA. This is DNA ligase from Bacillus cereus (strain AH187).